Here is a 616-residue protein sequence, read N- to C-terminus: Dihydroxy-acid dehydratase (616 aa).

Mg(2+) is bound at residue D81. A [2Fe-2S] cluster-binding site is contributed by C122. The Mg(2+) site is built by D123 and K124. The residue at position 124 (K124) is an N6-carboxylysine. C196 contacts [2Fe-2S] cluster. Residue E496 participates in Mg(2+) binding. Residue S522 is the Proton acceptor of the active site.

Belongs to the IlvD/Edd family. As to quaternary structure, homodimer. It depends on [2Fe-2S] cluster as a cofactor. Requires Mg(2+) as cofactor.

It catalyses the reaction (2R)-2,3-dihydroxy-3-methylbutanoate = 3-methyl-2-oxobutanoate + H2O. It carries out the reaction (2R,3R)-2,3-dihydroxy-3-methylpentanoate = (S)-3-methyl-2-oxopentanoate + H2O. It functions in the pathway amino-acid biosynthesis; L-isoleucine biosynthesis; L-isoleucine from 2-oxobutanoate: step 3/4. It participates in amino-acid biosynthesis; L-valine biosynthesis; L-valine from pyruvate: step 3/4. Its function is as follows. Functions in the biosynthesis of branched-chain amino acids. Catalyzes the dehydration of (2R,3R)-2,3-dihydroxy-3-methylpentanoate (2,3-dihydroxy-3-methylvalerate) into 2-oxo-3-methylpentanoate (2-oxo-3-methylvalerate) and of (2R)-2,3-dihydroxy-3-methylbutanoate (2,3-dihydroxyisovalerate) into 2-oxo-3-methylbutanoate (2-oxoisovalerate), the penultimate precursor to L-isoleucine and L-valine, respectively. The chain is Dihydroxy-acid dehydratase from Streptomyces griseus subsp. griseus (strain JCM 4626 / CBS 651.72 / NBRC 13350 / KCC S-0626 / ISP 5235).